Consider the following 230-residue polypeptide: Large ribosomal subunit protein uL1 (230 aa).

Belongs to the universal ribosomal protein uL1 family. Part of the 50S ribosomal subunit.

In terms of biological role, binds directly to 23S rRNA. The L1 stalk is quite mobile in the ribosome, and is involved in E site tRNA release. Protein L1 is also a translational repressor protein, it controls the translation of the L11 operon by binding to its mRNA. This is Large ribosomal subunit protein uL1 from Staphylococcus aureus (strain N315).